Reading from the N-terminus, the 220-residue chain is Urease accessory protein UreE (220 aa).

The interval 145–220 (EGGAYSAGGH…QIHKRRPDNL (76 aa)) is disordered. The span at 156–177 (HGHDHGSHEHSAHDHGKHDHAP) shows a compositional bias: basic and acidic residues. Positions 178–188 (AKPATAATPAA) are enriched in low complexity. The span at 191–206 (HGPDCNHGHDHAHEAK) shows a compositional bias: basic and acidic residues.

Belongs to the UreE family.

It is found in the cytoplasm. Involved in urease metallocenter assembly. Binds nickel. Probably functions as a nickel donor during metallocenter assembly. This Polaromonas sp. (strain JS666 / ATCC BAA-500) protein is Urease accessory protein UreE.